Here is a 224-residue protein sequence, read N- to C-terminus: 7-cyano-7-deazaguanine synthase (224 aa).

12–22 (LSGGLDSSTVT) provides a ligand contact to ATP. Zn(2+) is bound by residues Cys193, Cys201, Cys204, and Cys207.

It belongs to the QueC family. Requires Zn(2+) as cofactor.

The catalysed reaction is 7-carboxy-7-deazaguanine + NH4(+) + ATP = 7-cyano-7-deazaguanine + ADP + phosphate + H2O + H(+). Its pathway is purine metabolism; 7-cyano-7-deazaguanine biosynthesis. Functionally, catalyzes the ATP-dependent conversion of 7-carboxy-7-deazaguanine (CDG) to 7-cyano-7-deazaguanine (preQ(0)). In Prochlorococcus marinus (strain MIT 9312), this protein is 7-cyano-7-deazaguanine synthase.